The primary structure comprises 369 residues: Cyanuric acid amidohydrolase (369 aa).

The interval 1 to 100 (MPRRAEILRL…HWLVIAAREA (100 aa)) is RU A. Substrate-binding positions include arginine 53 and 81–82 (SG). The tract at residues 106–242 (ALAVGQARTP…HEVVVMGMSP (137 aa)) is RU B. Lysine 155 is an active-site residue. Substrate contacts are provided by residues arginine 187 and 225–226 (SA). Serine 225 (nucleophile) is an active-site residue. The tract at residues 248-369 (LVIDHAVMAD…ARRSGAAGPA (122 aa)) is RU C. Glutamate 296 contacts Mg(2+). Substrate contacts are provided by residues arginine 323 and 342 to 343 (SG). The Mg(2+) site is built by alanine 345, glutamine 348, glycine 349, proline 350, and glycine 353.

It belongs to the cyclic amide hydrolase (CyAH) family. Homotetramer.

The enzyme catalyses cyanurate + H2O = 1-carboxybiuret + H(+). It participates in xenobiotic degradation; atrazine degradation; biuret from cyanurate: step 1/1. Inhibited by barbituric acid. Functionally, responsible for the hydrolysis of cyanuric acid, an intermediate formed during catabolism of s-triazine based compounds in herbicides such as atrazine and polymers such as melamine. Catalyzes the hydrolytic opening of the s-triazine ring of cyanuric acid (2,4,6-trihydroxy-s-triazine) to yield carbon dioxide and carboxybiuret, which spontaneously decarboxylates to biuret. The polypeptide is Cyanuric acid amidohydrolase (Methylobacterium sp. (strain 4-46)).